The following is a 155-amino-acid chain: Aspartate carbamoyltransferase regulatory chain (155 aa).

Zn(2+) is bound by residues C113, C118, C139, and C142.

This sequence belongs to the PyrI family. Contains catalytic and regulatory chains. The cofactor is Zn(2+).

In terms of biological role, involved in allosteric regulation of aspartate carbamoyltransferase. This is Aspartate carbamoyltransferase regulatory chain from Methanosphaerula palustris (strain ATCC BAA-1556 / DSM 19958 / E1-9c).